Reading from the N-terminus, the 49-residue chain is Large ribosomal subunit protein bL33C (49 aa).

The interval 21-49 (KNKRNNPDRVEFKKYCPRDKKSTLHRETK) is disordered. The span at 25 to 49 (NNPDRVEFKKYCPRDKKSTLHRETK) shows a compositional bias: basic and acidic residues.

Belongs to the bacterial ribosomal protein bL33 family.

This Bacillus licheniformis (strain ATCC 14580 / DSM 13 / JCM 2505 / CCUG 7422 / NBRC 12200 / NCIMB 9375 / NCTC 10341 / NRRL NRS-1264 / Gibson 46) protein is Large ribosomal subunit protein bL33C.